The chain runs to 972 residues: Multiple C2 domain and transmembrane region protein 8 (972 aa).

The C2 1 domain occupies 1–107 (MMSNLKLGVE…PYSEAVGLPY (107 aa)). The interval 142–203 (PNLISTKKIP…MMESSLYQAP (62 aa)) is disordered. Over residues 150–159 (IPSKSRHKFH) the composition is skewed to basic residues. A compositionally biased stretch (polar residues) spans 161–173 (IPTNESNHSPRGN). A compositionally biased stretch (pro residues) spans 179–194 (PQPPPPQSQTALPPPM). 3 C2 domains span residues 232 to 352 (GGGK…PEWY), 384 to 507 (ALNA…NRWF), and 543 to 669 (YSSD…SHSY). Residues aspartate 265, aspartate 271, aspartate 318, aspartate 320, and aspartate 325 each coordinate Ca(2+). The next 2 membrane-spanning stretches (helical) occupy residues 803 to 823 (IIFL…SLCL) and 924 to 944 (TVVL…LYIM).

It belongs to the MCTP family. Ca(2+) serves as cofactor. Expressed in root hairs.

Its subcellular location is the membrane. The protein localises to the vesicle. In terms of biological role, may function as a signaling molecule by regulating the trafficking of other regulators. This Arabidopsis thaliana (Mouse-ear cress) protein is Multiple C2 domain and transmembrane region protein 8.